Here is a 450-residue protein sequence, read N- to C-terminus: UDP-N-acetylmuramoylalanine--D-glutamate ligase (450 aa).

An ATP-binding site is contributed by G119–T125.

Belongs to the MurCDEF family.

It localises to the cytoplasm. It carries out the reaction UDP-N-acetyl-alpha-D-muramoyl-L-alanine + D-glutamate + ATP = UDP-N-acetyl-alpha-D-muramoyl-L-alanyl-D-glutamate + ADP + phosphate + H(+). Its pathway is cell wall biogenesis; peptidoglycan biosynthesis. Its function is as follows. Cell wall formation. Catalyzes the addition of glutamate to the nucleotide precursor UDP-N-acetylmuramoyl-L-alanine (UMA). The chain is UDP-N-acetylmuramoylalanine--D-glutamate ligase from Bacillus anthracis (strain A0248).